Consider the following 243-residue polypeptide: 1-(5-phosphoribosyl)-5-[(5-phosphoribosylamino)methylideneamino] imidazole-4-carboxamide isomerase (243 aa).

Aspartate 8 serves as the catalytic Proton acceptor. Aspartate 130 acts as the Proton donor in catalysis.

Belongs to the HisA/HisF family.

The protein localises to the cytoplasm. It catalyses the reaction 1-(5-phospho-beta-D-ribosyl)-5-[(5-phospho-beta-D-ribosylamino)methylideneamino]imidazole-4-carboxamide = 5-[(5-phospho-1-deoxy-D-ribulos-1-ylimino)methylamino]-1-(5-phospho-beta-D-ribosyl)imidazole-4-carboxamide. It participates in amino-acid biosynthesis; L-histidine biosynthesis; L-histidine from 5-phospho-alpha-D-ribose 1-diphosphate: step 4/9. The polypeptide is 1-(5-phosphoribosyl)-5-[(5-phosphoribosylamino)methylideneamino] imidazole-4-carboxamide isomerase (Ruthia magnifica subsp. Calyptogena magnifica).